The sequence spans 625 residues: DELLA protein SLR1 (625 aa).

The tract at residues 1–34 is disordered; that stretch reads MKREYQEAGGSSGGGSSADMGSCKDKVMAGAAGE. The DELLA motif signature appears at 39–43; sequence DELLA. The interval 167-209 is disordered; that stretch reads TADPSAADSARDTKRMRTGGGSTSSSSSSSSSLGGGASRGSVV. Over residues 189 to 198 the composition is skewed to low complexity; it reads TSSSSSSSSS. Residues 232–621 enclose the GRAS domain; it reads VDTQEAGIRL…RPLIATSAWR (390 aa). The segment at 239-294 is leucine repeat I (LRI); sequence IRLVHALLACAEAVQQENFAAAEALVKQIPTLAASQGGAMRKVAAYFGEALARRVY. Residues 241 to 278 are required for possible homodimerization; sequence LVHALLACAEAVQQENFAAAEALVKQIPTLAASQGGAM. Positions 246 to 250 match the LxCxE motif motif; it reads LACAE. Residues 313–378 form a VHIID region; that stretch reads HAHFYESCPY…GGPPSFRLTG (66 aa). The VHIID motif lies at 344–348; sequence VHVVD. The segment at 392 to 431 is leucine repeat II (LRII); sequence QVGWKLAQFAHTIRVDFQYRGLVAATLADLEPFMLQPEGE. The tract at residues 441 to 542 is PFYRE; sequence IAVNSVFELH…EVYLGRQICN (102 aa). Residues 449–453 carry the LXXLL motif motif; the sequence is LHRLL. The segment at 545-621 is SAW; that stretch reads ACEGAERTER…RPLIATSAWR (77 aa).

Belongs to the GRAS family. DELLA subfamily. May be a homodimer. Interacts directly with the GID2 component of the SCF(GID2) complex. Interacts with GID1 in a GA-dependent manner, probably leading to its interaction with GID2 and its subsequent degradation. Interacts with D14 and GID1 in an strigolactone-dependent manner. Interacts with HD16/EL1. In terms of processing, phosphorylated on Ser/Thr residues in the N-terminal part. Both phosphorylated and unphosphorylated forms are degraded upon GA treatment, suggesting that phosphorylation does not trigger ubiquitination. Phosphorylated by HD16/EL1. Phosphorylation enhances its stability. Ubiquitinated. Upon GA application it is ubiquitinated by the SCF(GID2) complex, leading to its subsequent degradation. Expressed in nodes, internodes, leaf sheats of young seedlings and ears of adult plants. Weakly expressed in leaf blade and root.

The protein localises to the nucleus. Its function is as follows. Probable transcriptional regulator that acts as a repressor of the gibberellin (GA) signaling pathway. Probably acts by participating in large multiprotein complexes that repress transcription of GA-inducible genes. Upon GA application, it is degraded by the proteasome, allowing the GA signaling pathway. In contrast, its overexpression prevents the GA signaling pathway and induces a dwarf phenotype. The chain is DELLA protein SLR1 from Oryza sativa subsp. japonica (Rice).